A 295-amino-acid polypeptide reads, in one-letter code: Protease HtpX (295 aa).

The next 2 membrane-spanning stretches (helical) occupy residues 4 to 24 (ILLF…TLSL) and 41 to 61 (GQLL…SLFI). His147 is a binding site for Zn(2+). Residue Glu148 is part of the active site. His151 lines the Zn(2+) pocket. A run of 2 helical transmembrane segments spans residues 158-178 (VTMA…ARII) and 198-218 (FVAT…IVMW). Residue Glu224 coordinates Zn(2+).

It belongs to the peptidase M48B family. The cofactor is Zn(2+).

The protein localises to the cell inner membrane. The protein is Protease HtpX of Pseudomonas entomophila (strain L48).